Here is a 333-residue protein sequence, read N- to C-terminus: Phosphate acyltransferase (333 aa).

Belongs to the PlsX family. Homodimer. Probably interacts with PlsY.

Its subcellular location is the cytoplasm. It carries out the reaction a fatty acyl-[ACP] + phosphate = an acyl phosphate + holo-[ACP]. It participates in lipid metabolism; phospholipid metabolism. In terms of biological role, catalyzes the reversible formation of acyl-phosphate (acyl-PO(4)) from acyl-[acyl-carrier-protein] (acyl-ACP). This enzyme utilizes acyl-ACP as fatty acyl donor, but not acyl-CoA. The protein is Phosphate acyltransferase of Lactobacillus acidophilus (strain ATCC 700396 / NCK56 / N2 / NCFM).